Here is a 548-residue protein sequence, read N- to C-terminus: ATP synthase subunit alpha (548 aa).

Residue 172 to 179 participates in ATP binding; the sequence is GDRKTGKT.

This sequence belongs to the ATPase alpha/beta chains family. As to quaternary structure, F-type ATPases have 2 components, CF(1) - the catalytic core - and CF(0) - the membrane proton channel. CF(1) has five subunits: alpha(3), beta(3), gamma(1), delta(1), epsilon(1). CF(0) has three main subunits: a(1), b(2) and c(9-12). The alpha and beta chains form an alternating ring which encloses part of the gamma chain. CF(1) is attached to CF(0) by a central stalk formed by the gamma and epsilon chains, while a peripheral stalk is formed by the delta and b chains.

It localises to the cell membrane. It catalyses the reaction ATP + H2O + 4 H(+)(in) = ADP + phosphate + 5 H(+)(out). In terms of biological role, produces ATP from ADP in the presence of a proton gradient across the membrane. The alpha chain is a regulatory subunit. The sequence is that of ATP synthase subunit alpha from Mycobacteroides abscessus (strain ATCC 19977 / DSM 44196 / CCUG 20993 / CIP 104536 / JCM 13569 / NCTC 13031 / TMC 1543 / L948) (Mycobacterium abscessus).